Reading from the N-terminus, the 459-residue chain is Jacalin-related lectin 12 (459 aa).

3 consecutive Jacalin-type lectin domains span residues serine 2–proline 148, proline 151–threonine 296, and threonine 298–proline 443.

It belongs to the jacalin lectin family.

This chain is Jacalin-related lectin 12 (JAL12), found in Arabidopsis thaliana (Mouse-ear cress).